A 642-amino-acid chain; its full sequence is MGKTIGIDLGTTNSCVAVLDGGKARVIENGEGDRTTPSVVAFTDDGEILVGSPAKRQAVTNPNKTLFAIKRLIGRRFQDEEVQRDIGIMPYKIVKADNGDAWVEIDGDKKAPPQISAEVLKKMKKTAEEFLGEKVTDAVITVPAYFNDAQRQATKDAGKIAGLNVKRIINEPTAAALAYGMDKKSGDNVIAVYDLGGGTFDISIIEIDEVEGEHTFEVLATNGDTHLGGEDFDNRLINYLVEQFQKDQGMDLRKDPLAMQRLKEAAEKAKIELSSAQQTEVNLPYITADNAGPKHMAIKVTRAKLESLVEDLIKKSLEPLKQALADADLSVSDIQDIIMVGGQTRMPKVQAAVTDFFGKEPRRDVNPDEAVAVGAAVQAGVLQGDVKDVLLLDVCPLSLGIETMGGVMTKLIEKNTTIPTKESQTFSTAEDNQSAVTIHVIQGERKRAGDNKSLGQFNLEGIRAAARGVPQIEVTFDIDADGILHVSAKDKDTGKEQKITIKASSGLDESEVDKMVKDAEAHAEEDKKFEEMVQARNQADGLVHATRNQLKEVGDALSQEDKDAIEKACEELEQASKDGDKEAIDAKSQALMEASQKLMEAAQQQQAQQGAEGAAGGEQQSSKADDDVVDAEFEEVKDDDKK.

A Phosphothreonine; by autocatalysis modification is found at threonine 199. A compositionally biased stretch (basic and acidic residues) spans 570-585 (EELEQASKDGDKEAID). Residues 570-642 (EELEQASKDG…FEEVKDDDKK (73 aa)) form a disordered region. The span at 600–620 (EAAQQQQAQQGAEGAAGGEQQ) shows a compositional bias: low complexity. Residues 627–642 (DVVDAEFEEVKDDDKK) show a composition bias toward acidic residues.

Belongs to the heat shock protein 70 family.

Its function is as follows. Acts as a chaperone. The chain is Chaperone protein DnaK from Idiomarina loihiensis (strain ATCC BAA-735 / DSM 15497 / L2-TR).